A 211-amino-acid polypeptide reads, in one-letter code: ATP phosphoribosyltransferase (211 aa).

The protein belongs to the ATP phosphoribosyltransferase family. Short subfamily. As to quaternary structure, heteromultimer composed of HisG and HisZ subunits.

Its subcellular location is the cytoplasm. It catalyses the reaction 1-(5-phospho-beta-D-ribosyl)-ATP + diphosphate = 5-phospho-alpha-D-ribose 1-diphosphate + ATP. It participates in amino-acid biosynthesis; L-histidine biosynthesis; L-histidine from 5-phospho-alpha-D-ribose 1-diphosphate: step 1/9. Functionally, catalyzes the condensation of ATP and 5-phosphoribose 1-diphosphate to form N'-(5'-phosphoribosyl)-ATP (PR-ATP). Has a crucial role in the pathway because the rate of histidine biosynthesis seems to be controlled primarily by regulation of HisG enzymatic activity. In Bacillus thuringiensis subsp. konkukian (strain 97-27), this protein is ATP phosphoribosyltransferase.